The sequence spans 281 residues: Acetyl-coenzyme A carboxylase carboxyl transferase subunit beta (281 aa).

Positions 23-281 constitute a CoA carboxyltransferase N-terminal domain; the sequence is IWTKCGSCQA…SLLVKLHYKN (259 aa). 4 residues coordinate Zn(2+): cysteine 27, cysteine 30, cysteine 46, and cysteine 49. The C4-type zinc finger occupies 27 to 49; that stretch reads CGSCQAVLYKSELEKLQEVCPKC.

Belongs to the AccD/PCCB family. In terms of assembly, acetyl-CoA carboxylase is a heterohexamer composed of biotin carboxyl carrier protein (AccB), biotin carboxylase (AccC) and two subunits each of ACCase subunit alpha (AccA) and ACCase subunit beta (AccD). The cofactor is Zn(2+).

The protein localises to the cytoplasm. It carries out the reaction N(6)-carboxybiotinyl-L-lysyl-[protein] + acetyl-CoA = N(6)-biotinyl-L-lysyl-[protein] + malonyl-CoA. Its pathway is lipid metabolism; malonyl-CoA biosynthesis; malonyl-CoA from acetyl-CoA: step 1/1. In terms of biological role, component of the acetyl coenzyme A carboxylase (ACC) complex. Biotin carboxylase (BC) catalyzes the carboxylation of biotin on its carrier protein (BCCP) and then the CO(2) group is transferred by the transcarboxylase to acetyl-CoA to form malonyl-CoA. This is Acetyl-coenzyme A carboxylase carboxyl transferase subunit beta from Alteromonas mediterranea (strain DSM 17117 / CIP 110805 / LMG 28347 / Deep ecotype).